The sequence spans 805 residues: Leucine--tRNA ligase (805 aa).

The 'HIGH' region signature appears at 40–51 (PYPSGQGLHVGH). The short motif at 577–581 (KMSKS) is the 'KMSKS' region element. Residue Lys580 participates in ATP binding.

The protein belongs to the class-I aminoacyl-tRNA synthetase family.

Its subcellular location is the cytoplasm. It catalyses the reaction tRNA(Leu) + L-leucine + ATP = L-leucyl-tRNA(Leu) + AMP + diphosphate. The sequence is that of Leucine--tRNA ligase from Limosilactobacillus fermentum (strain NBRC 3956 / LMG 18251) (Lactobacillus fermentum).